The sequence spans 787 residues: Protein translocase subunit SecA 2 (787 aa).

Residues Gln-86, 104 to 108 (GEGKT), and Asp-493 contribute to the ATP site.

Belongs to the SecA family. In terms of assembly, monomer and homodimer. Part of the essential Sec protein translocation apparatus which comprises SecA, SecYEG and auxiliary proteins SecDF. Other proteins may also be involved.

Its subcellular location is the cell membrane. The protein localises to the cytoplasm. The catalysed reaction is ATP + H2O + cellular proteinSide 1 = ADP + phosphate + cellular proteinSide 2.. In terms of biological role, part of the Sec protein translocase complex. Interacts with the SecYEG preprotein conducting channel. Has a central role in coupling the hydrolysis of ATP to the transfer of proteins into and across the cell membrane, serving as an ATP-driven molecular motor driving the stepwise translocation of polypeptide chains across the membrane. This is Protein translocase subunit SecA 2 from Bacillus thuringiensis subsp. konkukian (strain 97-27).